We begin with the raw amino-acid sequence, 168 residues long: Protein-export protein SecB (168 aa).

This sequence belongs to the SecB family. As to quaternary structure, homotetramer, a dimer of dimers. One homotetramer interacts with 1 SecA dimer.

It is found in the cytoplasm. Functionally, one of the proteins required for the normal export of preproteins out of the cell cytoplasm. It is a molecular chaperone that binds to a subset of precursor proteins, maintaining them in a translocation-competent state. It also specifically binds to its receptor SecA. This chain is Protein-export protein SecB, found in Saccharophagus degradans (strain 2-40 / ATCC 43961 / DSM 17024).